The sequence spans 150 residues: Transcriptional repressor NrdR (150 aa).

Residues 3 to 34 fold into a zinc finger; it reads CPFCAHPDSKVVDSRPDKGGAAIRRRRECESC. Residues 49–139 form the ATP-cone domain; it reads PLVLKKDGRR…VYRSFKDVNE (91 aa).

This sequence belongs to the NrdR family. Zn(2+) serves as cofactor.

In terms of biological role, negatively regulates transcription of bacterial ribonucleotide reductase nrd genes and operons by binding to NrdR-boxes. This is Transcriptional repressor NrdR from Geobacter metallireducens (strain ATCC 53774 / DSM 7210 / GS-15).